A 148-amino-acid polypeptide reads, in one-letter code: Ribonuclease pancreatic (148 aa).

The first 25 residues, methionine 1 to glycine 25, serve as a signal peptide directing secretion. Substrate-binding positions include lysine 32, arginine 35, lysine 65–threonine 69, lysine 90, and arginine 109. 4 disulfide bridges follow: cysteine 50–cysteine 108, cysteine 64–cysteine 119, cysteine 82–cysteine 134, and cysteine 89–cysteine 96. The active-site Proton donor is histidine 143.

The protein belongs to the pancreatic ribonuclease family. As to quaternary structure, monomer. Interacts with and forms tight 1:1 complexes with RNH1. Dimerization of two such complexes may occur. Interaction with RNH1 inhibits this protein. As to expression, pancreas.

The protein resides in the secreted. It carries out the reaction an [RNA] containing cytidine + H2O = an [RNA]-3'-cytidine-3'-phosphate + a 5'-hydroxy-ribonucleotide-3'-[RNA].. The catalysed reaction is an [RNA] containing uridine + H2O = an [RNA]-3'-uridine-3'-phosphate + a 5'-hydroxy-ribonucleotide-3'-[RNA].. In terms of biological role, endonuclease that catalyzes the cleavage of RNA on the 3' side of pyrimidine nucleotides. Acts on single-stranded and double-stranded RNA. This chain is Ribonuclease pancreatic (RNASE1), found in Peromyscus leucopus (White-footed mouse).